The sequence spans 318 residues: 2-keto-3-deoxygluconate permease (318 aa).

10 consecutive transmembrane segments (helical) span residues 10–30 (LPGGMMLVPLLLGALCHTLWP), 42–62 (GLISGTVPILAVWFFCMGATI), 82–102 (IAVAWLVAVLCAPLLPIGGVS), 109–129 (LSVLALVAAMDMTNGGLYAAL), 139–159 (AGAVVLMSLESGPLISMLILG), 163–183 (LASFEPQLFVGAVLPLLLGFA), 201–221 (TLVPFFGFALGNTLDLSTIAH), 224–244 (TSGVLLGVAVVVITGLPLLLA), 257–277 (VAASSTAGAAVATPALIAGMA), and 289–309 (ALVASAVIVTSLLVPLLTALY).

It belongs to the KdgT transporter family.

The protein resides in the cell inner membrane. It catalyses the reaction 2-dehydro-3-deoxy-D-gluconate(in) + H(+)(in) = 2-dehydro-3-deoxy-D-gluconate(out) + H(+)(out). Its function is as follows. Catalyzes the proton-dependent uptake of 2-keto-3-deoxygluconate (KDG) into the cell. The chain is 2-keto-3-deoxygluconate permease from Xanthomonas axonopodis pv. citri (strain 306).